Reading from the N-terminus, the 122-residue chain is Urease subunit beta (122 aa).

This sequence belongs to the urease beta subunit family. As to quaternary structure, heterotrimer of UreA (gamma), UreB (beta) and UreC (alpha) subunits. Three heterotrimers associate to form the active enzyme.

The protein localises to the cytoplasm. It catalyses the reaction urea + 2 H2O + H(+) = hydrogencarbonate + 2 NH4(+). Its pathway is nitrogen metabolism; urea degradation; CO(2) and NH(3) from urea (urease route): step 1/1. This Acetivibrio thermocellus (strain ATCC 27405 / DSM 1237 / JCM 9322 / NBRC 103400 / NCIMB 10682 / NRRL B-4536 / VPI 7372) (Clostridium thermocellum) protein is Urease subunit beta.